Consider the following 412-residue polypeptide: Isocitrate dehydrogenase [NADP] cytoplasmic (412 aa).

NADP(+)-binding positions include 76–78 (TIT) and Arg83. Thr78 lines the substrate pocket. Residues 95–101 (SPNGTIR), Arg110, and Arg133 contribute to the substrate site. A Mn(2+)-binding site is contributed by Asp253. Lys261 is a binding site for NADP(+). A Mn(2+)-binding site is contributed by Asp276. NADP(+) contacts are provided by residues 309–314 (GTVTRH) and Asn327.

The protein belongs to the isocitrate and isopropylmalate dehydrogenases family. Homodimer. Requires Mg(2+) as cofactor. Mn(2+) serves as cofactor.

The protein localises to the cytoplasm. The catalysed reaction is D-threo-isocitrate + NADP(+) = 2-oxoglutarate + CO2 + NADPH. The chain is Isocitrate dehydrogenase [NADP] cytoplasmic (idhC) from Dictyostelium discoideum (Social amoeba).